A 166-amino-acid polypeptide reads, in one-letter code: MSLLLRVGIGYDSHRFGEGGPMRLGGIDIPSDRHCAGHSDGDAICHAVTDALLGAAGLGDIGEMFPDTDAANKGKDSVVMLEAAVSRLHAAGWRVGNVDITVITQQPKIGPHRAAMRDRLATVLGVNSTEVFVKGKTNEGLGWIGREEGLGVIATATILAIGSSTL.

D12 and H14 together coordinate a divalent metal cation. 4-CDP-2-C-methyl-D-erythritol 2-phosphate contacts are provided by residues 12–14 and 38–39; these read DSH and HS. H46 contacts a divalent metal cation. Residues 60-62, 65-69, and R146 contribute to the 4-CDP-2-C-methyl-D-erythritol 2-phosphate site; these read DIG and FPDTD.

It belongs to the IspF family. As to quaternary structure, homotrimer. A divalent metal cation serves as cofactor.

The enzyme catalyses 4-CDP-2-C-methyl-D-erythritol 2-phosphate = 2-C-methyl-D-erythritol 2,4-cyclic diphosphate + CMP. Its pathway is isoprenoid biosynthesis; isopentenyl diphosphate biosynthesis via DXP pathway; isopentenyl diphosphate from 1-deoxy-D-xylulose 5-phosphate: step 4/6. Functionally, involved in the biosynthesis of isopentenyl diphosphate (IPP) and dimethylallyl diphosphate (DMAPP), two major building blocks of isoprenoid compounds. Catalyzes the conversion of 4-diphosphocytidyl-2-C-methyl-D-erythritol 2-phosphate (CDP-ME2P) to 2-C-methyl-D-erythritol 2,4-cyclodiphosphate (ME-CPP) with a corresponding release of cytidine 5-monophosphate (CMP). The chain is 2-C-methyl-D-erythritol 2,4-cyclodiphosphate synthase from Gemmatimonas aurantiaca (strain DSM 14586 / JCM 11422 / NBRC 100505 / T-27).